Here is a 100-residue protein sequence, read N- to C-terminus: uncharacterized protein (100 aa).

Positions P42–A84 are disordered. Over residues G50–E67 the composition is skewed to gly residues.

This is an uncharacterized protein from Torque teno tamarin virus (isolate So-TTV2).